A 521-amino-acid chain; its full sequence is NAD(P)H-quinone oxidoreductase subunit 2 (521 aa).

14 helical membrane-spanning segments follow: residues 16–36 (ILPE…DLIG), 40–60 (VALA…GLLV), 80–100 (LSII…LMSV), 110–130 (LAEF…LSAA), 133–153 (LVMV…MTGY), 168–188 (LLIG…LYGL), 212–232 (LGLA…ISAV), 246–266 (PTPV…AVAI), 280–300 (WHVI…VVAL), 308–328 (MLAY…VAGS), 336–356 (VFYM…IILF), 380–400 (LGLS…GFFG), 402–422 (IYIF…LGLV), and 468–488 (VGIV…NPLF).

It belongs to the complex I subunit 2 family. NDH-1 can be composed of about 15 different subunits; different subcomplexes with different compositions have been identified which probably have different functions.

It localises to the cellular thylakoid membrane. It carries out the reaction a plastoquinone + NADH + (n+1) H(+)(in) = a plastoquinol + NAD(+) + n H(+)(out). The enzyme catalyses a plastoquinone + NADPH + (n+1) H(+)(in) = a plastoquinol + NADP(+) + n H(+)(out). NDH-1 shuttles electrons from an unknown electron donor, via FMN and iron-sulfur (Fe-S) centers, to quinones in the respiratory and/or the photosynthetic chain. The immediate electron acceptor for the enzyme in this species is believed to be plastoquinone. Couples the redox reaction to proton translocation, and thus conserves the redox energy in a proton gradient. Cyanobacterial NDH-1 also plays a role in inorganic carbon-concentration. This is NAD(P)H-quinone oxidoreductase subunit 2 from Synechocystis sp. (strain ATCC 27184 / PCC 6803 / Kazusa).